The following is a 555-amino-acid chain: CTP synthase (555 aa).

The segment at 1-271 (MVKRGKKTKY…DDKLAELFNI (271 aa)) is amidoligase domain. Serine 19 lines the CTP pocket. Serine 19 provides a ligand contact to UTP. ATP is bound by residues 20–25 (SLGKGL) and aspartate 77. Mg(2+) contacts are provided by aspartate 77 and glutamate 145. CTP-binding positions include 152–154 (DIE), 192–197 (KTKPTQ), and lysine 228. UTP contacts are provided by residues 192-197 (KTKPTQ) and lysine 228. Positions 297–537 (RIGIVGKYVE…VKAALEHRDA (241 aa)) constitute a Glutamine amidotransferase type-1 domain. An L-glutamine-binding site is contributed by glycine 358. Cysteine 385 acts as the Nucleophile; for glutamine hydrolysis in catalysis. L-glutamine is bound by residues 386 to 389 (LGLQ), glutamate 409, and arginine 466. Active-site residues include histidine 510 and glutamate 512. The tract at residues 535-555 (RDAQQRQPPAEVKKLAVGKNG) is disordered.

Belongs to the CTP synthase family. As to quaternary structure, homotetramer.

The enzyme catalyses UTP + L-glutamine + ATP + H2O = CTP + L-glutamate + ADP + phosphate + 2 H(+). It catalyses the reaction L-glutamine + H2O = L-glutamate + NH4(+). It carries out the reaction UTP + NH4(+) + ATP = CTP + ADP + phosphate + 2 H(+). The protein operates within pyrimidine metabolism; CTP biosynthesis via de novo pathway; CTP from UDP: step 2/2. Allosterically activated by GTP, when glutamine is the substrate; GTP has no effect on the reaction when ammonia is the substrate. The allosteric effector GTP functions by stabilizing the protein conformation that binds the tetrahedral intermediate(s) formed during glutamine hydrolysis. Inhibited by the product CTP, via allosteric rather than competitive inhibition. Functionally, catalyzes the ATP-dependent amination of UTP to CTP with either L-glutamine or ammonia as the source of nitrogen. Regulates intracellular CTP levels through interactions with the four ribonucleotide triphosphates. The sequence is that of CTP synthase from Anaeromyxobacter dehalogenans (strain 2CP-1 / ATCC BAA-258).